Consider the following 343-residue polypeptide: N-acetyl-gamma-glutamyl-phosphate reductase (343 aa).

The active site involves cysteine 147.

The protein belongs to the NAGSA dehydrogenase family. Type 1 subfamily.

It localises to the cytoplasm. The enzyme catalyses N-acetyl-L-glutamate 5-semialdehyde + phosphate + NADP(+) = N-acetyl-L-glutamyl 5-phosphate + NADPH + H(+). The protein operates within amino-acid biosynthesis; L-arginine biosynthesis; N(2)-acetyl-L-ornithine from L-glutamate: step 3/4. Its function is as follows. Catalyzes the NADPH-dependent reduction of N-acetyl-5-glutamyl phosphate to yield N-acetyl-L-glutamate 5-semialdehyde. The chain is N-acetyl-gamma-glutamyl-phosphate reductase from Staphylococcus saprophyticus subsp. saprophyticus (strain ATCC 15305 / DSM 20229 / NCIMB 8711 / NCTC 7292 / S-41).